The primary structure comprises 441 residues: Homoserine dehydrogenase (441 aa).

Residues asparagine 17 and valine 18 each contribute to the NADP(+) site. NAD(+)-binding residues include valine 18, valine 37, and glycine 47. Valine 18 contacts NADPH. NADP(+) contacts are provided by arginine 49, arginine 50, and lysine 107. Arginine 49 is an NADPH binding site. Lysine 107 serves as a coordination point for NADPH. Residues glutamate 131, valine 134, glycine 136, and isoleucine 138 each coordinate Na(+). Glycine 189 and glutamate 192 together coordinate NADP(+). Residues glutamate 192 and aspartate 203 each contribute to the L-homoserine site. Catalysis depends on lysine 207, which acts as the Proton donor. NADP(+) is bound at residue glycine 309. Position 309 (glycine 309) interacts with NAD(+). NADPH is bound at residue glycine 309. The region spanning 356–435 (YVSMNVADKP…VVQGVSSVIR (80 aa)) is the ACT domain.

The protein belongs to the homoserine dehydrogenase family. A metal cation serves as cofactor.

It carries out the reaction L-homoserine + NADP(+) = L-aspartate 4-semialdehyde + NADPH + H(+). It catalyses the reaction L-homoserine + NAD(+) = L-aspartate 4-semialdehyde + NADH + H(+). It functions in the pathway amino-acid biosynthesis; L-methionine biosynthesis via de novo pathway; L-homoserine from L-aspartate: step 3/3. Its pathway is amino-acid biosynthesis; L-threonine biosynthesis; L-threonine from L-aspartate: step 3/5. Its function is as follows. Catalyzes the conversion of L-aspartate-beta-semialdehyde (L-Asa) to L-homoserine (L-Hse), the third step in the biosynthesis of threonine and methionine from aspartate. The sequence is that of Homoserine dehydrogenase (hom) from Mycobacterium tuberculosis (strain CDC 1551 / Oshkosh).